The primary structure comprises 637 residues: MVNEKTSTDQLVRRFIEDLGVTYEEQGSSNIQIKQALRSASKSKSQSGVGKPEFIFFSGNHLIIVEDKLAIDKLEYKNNDGIIDTEFPFRRDYAVNGAVHYARHIIEKTNSYKEVIAIGIAGDGLHYQIHPYFVSETELKKLPEMKSLEDISPENIEEFYKVAVLGELPKEERELREVNKIAADMHEDLRNYGQLEGEKKATVVSAILLALEEPTFSLNQLIGSDRVGGTDGEIIFNAVRVYLENAGIVPYAKVGEMLDQFIFIQRDVTLNTVNSNLEMTPLKYFATTLEAEIMDKIKSNTDFDILGNFYGEFVKYGGNDGNPLGIVLTPRHITSLMAELIGINKSDFVLDPACGTGAFLISAMNRMLGQAENDDERRDIKQNRLYGIEIQQKLFTIATTNMILRGDGKSNLIRDNCLTFDNTIMNGYGINKILMNPPYSQAKNDQTQHLSELSFIQQALEMLVVGGKLCAIVPQSTMVGKNRHDKARKKQILKQHTLETVITLNKDTFHGVGVNPCIVIFKAGIKHPENKRVSFVNFEDDGHVVRKHVGLVGDGTEKGKREHLLAVLAGDEDDGTDLIVKTAIKDTDEWLHSFYYFNDGIPSEDDFYKTVANYLTFQFDMTANGKGYLFEGVEENE.

The protein in the C-terminal section; belongs to the N(4)/N(6)-methyltransferase family. Heterotrimer of two A and one B subunit. Both subunits are necessary for DNA-binding, which is sequence non-specific. Requires Mg(2+) as cofactor.

It carries out the reaction Endonucleolytic cleavage of DNA to give specific double-stranded fragments with terminal 5'-phosphates.. The catalysed reaction is a 2'-deoxyadenosine in DNA + S-adenosyl-L-methionine = an N(6)-methyl-2'-deoxyadenosine in DNA + S-adenosyl-L-homocysteine + H(+). With respect to regulation, DNA restriction requires S-adenosyl-L-methionine and Mg(2+), and is inhibited by S-adenosyl-homocysteine. SAM may be a cofactor for DNA restriction. Its function is as follows. A B, G, H and S subtype restriction enzyme that recognizes the double-stranded sequence 5'-CGAN(6)TGC-3' and cleaves bilaterally and symmetrically 10 base pairs upstream and 12 base pairs downstream of the sequence to release a 34-base pair fragment. Methylation of the recognition sequence occurs on the adenine in either one or both strands; seems to methylate restricted DNA. This subunit has no methylation or DNA restriction activity on its own. The protein is Type II restriction enzyme and methyltransferase RM.BcgI of Heyndrickxia coagulans (Weizmannia coagulans).